Consider the following 473-residue polypeptide: 3-isopropylmalate dehydratase large subunit (473 aa).

The [4Fe-4S] cluster site is built by Cys-351, Cys-414, and Cys-417.

The protein belongs to the aconitase/IPM isomerase family. LeuC type 1 subfamily. As to quaternary structure, heterodimer of LeuC and LeuD. Requires [4Fe-4S] cluster as cofactor.

It catalyses the reaction (2R,3S)-3-isopropylmalate = (2S)-2-isopropylmalate. Its pathway is amino-acid biosynthesis; L-leucine biosynthesis; L-leucine from 3-methyl-2-oxobutanoate: step 2/4. In terms of biological role, catalyzes the isomerization between 2-isopropylmalate and 3-isopropylmalate, via the formation of 2-isopropylmaleate. The polypeptide is 3-isopropylmalate dehydratase large subunit (Polaromonas sp. (strain JS666 / ATCC BAA-500)).